The sequence spans 154 residues: Small ribosomal subunit protein uS15 (154 aa).

A disordered region spans residues 1 to 23; that stretch reads MNKKRDKGQSHSTRPARAGPPRW.

This sequence belongs to the universal ribosomal protein uS15 family. In terms of assembly, part of the 30S ribosomal subunit.

This is Small ribosomal subunit protein uS15 from Staphylothermus marinus (strain ATCC 43588 / DSM 3639 / JCM 9404 / F1).